A 618-amino-acid polypeptide reads, in one-letter code: 1-deoxy-D-xylulose-5-phosphate synthase (618 aa).

Thiamine diphosphate contacts are provided by residues His70 and 111 to 113; that span reads GHS. Asp142 provides a ligand contact to Mg(2+). Thiamine diphosphate-binding positions include 143 to 144, Asn171, Tyr278, and Glu360; that span reads GS. Residue Asn171 participates in Mg(2+) binding.

It belongs to the transketolase family. DXPS subfamily. In terms of assembly, homodimer. Mg(2+) is required as a cofactor. The cofactor is thiamine diphosphate.

It carries out the reaction D-glyceraldehyde 3-phosphate + pyruvate + H(+) = 1-deoxy-D-xylulose 5-phosphate + CO2. Its pathway is metabolic intermediate biosynthesis; 1-deoxy-D-xylulose 5-phosphate biosynthesis; 1-deoxy-D-xylulose 5-phosphate from D-glyceraldehyde 3-phosphate and pyruvate: step 1/1. Catalyzes the acyloin condensation reaction between C atoms 2 and 3 of pyruvate and glyceraldehyde 3-phosphate to yield 1-deoxy-D-xylulose-5-phosphate (DXP). The chain is 1-deoxy-D-xylulose-5-phosphate synthase from Helicobacter pylori (strain G27).